Reading from the N-terminus, the 24-residue chain is Tryptophanase operon leader peptide (24 aa).

The polypeptide is Tryptophanase operon leader peptide (tnaL) (Escherichia coli O157:H7).